The sequence spans 109 residues: Irditoxin subunit A (109 aa).

The N-terminal stretch at 1–19 is a signal peptide; it reads MKTLLLAVAVVAFVCLGSA. The propeptide occupies 20 to 34; sequence DQLGLGRQQIDWGQG. Q35 is modified (pyrrolidone carboxylic acid). 5 disulfide bridges follow: C44–C66, C47–C55, C61–C85, C89–C100, and C101–C106.

The protein belongs to the three-finger toxin family. Ancestral subfamily. Boigatoxin sub-subfamily. In terms of assembly, heterodimer of A and B chains; disulfide-linked. Expressed by the venom gland.

It localises to the secreted. In terms of biological role, this bird and reptile-specific postsynaptic neurotoxin inhibits the chick muscle alpha-1-beta-1-gamma-delta (CHRNA1-CHRNB1-CHRNG-CHNRD) nicotinic acetylcholine receptor (nAChR) 100-fold more compared with the mouse receptor. In vivo, produces rapid flaccid paralysis, dyspnea and increased respiratory rate in geckos. At sublethal doses geckos were immobilized for up to three days and then recovered. Chicks injected with lethal doses showed rapid onset of inactivity, dyspnea and neck droop, and no extended paralysis with survival was seen. The chain is Irditoxin subunit A from Boiga irregularis (Brown tree snake).